A 111-amino-acid chain; its full sequence is Urease subunit beta (111 aa).

It belongs to the urease beta subunit family. As to quaternary structure, heterotrimer of UreA (gamma), UreB (beta) and UreC (alpha) subunits. Three heterotrimers associate to form the active enzyme.

The protein localises to the cytoplasm. The catalysed reaction is urea + 2 H2O + H(+) = hydrogencarbonate + 2 NH4(+). It functions in the pathway nitrogen metabolism; urea degradation; CO(2) and NH(3) from urea (urease route): step 1/1. The polypeptide is Urease subunit beta (Psychrobacter cryohalolentis (strain ATCC BAA-1226 / DSM 17306 / VKM B-2378 / K5)).